The chain runs to 269 residues: Shikimate dehydrogenase (NADP(+)) (269 aa).

Shikimate is bound by residues S14–S16 and T61. K65 functions as the Proton acceptor in the catalytic mechanism. An NADP(+)-binding site is contributed by E76. Residues N85 and D99 each contribute to the shikimate site. NADP(+) is bound by residues G123 to A127, N146 to R151, and I209. Residue Y211 coordinates shikimate. G231 contributes to the NADP(+) binding site.

It belongs to the shikimate dehydrogenase family. As to quaternary structure, homodimer.

The catalysed reaction is shikimate + NADP(+) = 3-dehydroshikimate + NADPH + H(+). The protein operates within metabolic intermediate biosynthesis; chorismate biosynthesis; chorismate from D-erythrose 4-phosphate and phosphoenolpyruvate: step 4/7. Its function is as follows. Involved in the biosynthesis of the chorismate, which leads to the biosynthesis of aromatic amino acids. Catalyzes the reversible NADPH linked reduction of 3-dehydroshikimate (DHSA) to yield shikimate (SA). The polypeptide is Shikimate dehydrogenase (NADP(+)) (Methanothrix thermoacetophila (strain DSM 6194 / JCM 14653 / NBRC 101360 / PT) (Methanosaeta thermophila)).